Reading from the N-terminus, the 124-residue chain is Probable glycine cleavage system H protein (124 aa).

A Lipoyl-binding domain is found at 25–106; sequence TATIGITDYA…PYGSWLVKMA (82 aa). An N6-lipoyllysine modification is found at Lys66.

The protein belongs to the GcvH family. As to quaternary structure, the glycine cleavage system is composed of four proteins: P, T, L and H. It depends on (R)-lipoate as a cofactor.

In terms of biological role, the glycine cleavage system catalyzes the degradation of glycine. The H protein shuttles the methylamine group of glycine from the P protein to the T protein. The polypeptide is Probable glycine cleavage system H protein (Thermoplasma acidophilum (strain ATCC 25905 / DSM 1728 / JCM 9062 / NBRC 15155 / AMRC-C165)).